We begin with the raw amino-acid sequence, 280 residues long: Shikimate dehydrogenase (NADP(+)) (280 aa).

Residues 20-22 (SRS) and Thr67 each bind shikimate. The active-site Proton acceptor is Lys71. Asp82 lines the NADP(+) pocket. The shikimate site is built by Asn91 and Asp106. NADP(+)-binding positions include 131 to 135 (GAGGS) and Leu220. Residue Tyr222 participates in shikimate binding. Gly243 is an NADP(+) binding site.

It belongs to the shikimate dehydrogenase family. Homodimer.

It catalyses the reaction shikimate + NADP(+) = 3-dehydroshikimate + NADPH + H(+). It functions in the pathway metabolic intermediate biosynthesis; chorismate biosynthesis; chorismate from D-erythrose 4-phosphate and phosphoenolpyruvate: step 4/7. Involved in the biosynthesis of the chorismate, which leads to the biosynthesis of aromatic amino acids. Catalyzes the reversible NADPH linked reduction of 3-dehydroshikimate (DHSA) to yield shikimate (SA). In Rhodopseudomonas palustris (strain HaA2), this protein is Shikimate dehydrogenase (NADP(+)).